The chain runs to 316 residues: WSCD family member GA21586 (316 aa).

A helical transmembrane segment spans residues 8–28; the sequence is FFGVSATIIIYIGGVLFLSMN. Residues Asn78, Asn150, Asn226, and Asn232 are each glycosylated (N-linked (GlcNAc...) asparagine).

It belongs to the WSCD family.

It is found in the membrane. This Drosophila pseudoobscura pseudoobscura (Fruit fly) protein is WSCD family member GA21586.